Reading from the N-terminus, the 320-residue chain is Lipoyl synthase (320 aa).

The disordered stretch occupies residues 1-26 (MVTVVDRVTSRRLRHPEKMHRPDTSI). Residues Cys59, Cys64, Cys70, Cys85, Cys89, Cys92, and Ser298 each contribute to the [4Fe-4S] cluster site. A Radical SAM core domain is found at 71–287 (WSQRHASFMI…AKIGKVKGFL (217 aa)).

Belongs to the radical SAM superfamily. Lipoyl synthase family. Requires [4Fe-4S] cluster as cofactor.

Its subcellular location is the cytoplasm. The enzyme catalyses [[Fe-S] cluster scaffold protein carrying a second [4Fe-4S](2+) cluster] + N(6)-octanoyl-L-lysyl-[protein] + 2 oxidized [2Fe-2S]-[ferredoxin] + 2 S-adenosyl-L-methionine + 4 H(+) = [[Fe-S] cluster scaffold protein] + N(6)-[(R)-dihydrolipoyl]-L-lysyl-[protein] + 4 Fe(3+) + 2 hydrogen sulfide + 2 5'-deoxyadenosine + 2 L-methionine + 2 reduced [2Fe-2S]-[ferredoxin]. Its pathway is protein modification; protein lipoylation via endogenous pathway; protein N(6)-(lipoyl)lysine from octanoyl-[acyl-carrier-protein]: step 2/2. Its function is as follows. Catalyzes the radical-mediated insertion of two sulfur atoms into the C-6 and C-8 positions of the octanoyl moiety bound to the lipoyl domains of lipoate-dependent enzymes, thereby converting the octanoylated domains into lipoylated derivatives. In Bartonella quintana (strain Toulouse) (Rochalimaea quintana), this protein is Lipoyl synthase.